Here is a 494-residue protein sequence, read N- to C-terminus: Alanine--glyoxylate aminotransferase 2-like (494 aa).

At Lys291 the chain carries N6-(pyridoxal phosphate)lysine.

The protein belongs to the class-III pyridoxal-phosphate-dependent aminotransferase family. Requires pyridoxal 5'-phosphate as cofactor.

In Drosophila melanogaster (Fruit fly), this protein is Alanine--glyoxylate aminotransferase 2-like.